We begin with the raw amino-acid sequence, 632 residues long: Cleavage stimulation factor subunit 2 tau variant (632 aa).

The region spanning 16–94 is the RRM domain; that stretch reads RSVFVGNIPY…RALRVDNAAS (79 aa). Disordered stretches follow at residues 201–296 and 365–433; these read IPGK…PGGA and YMGP…TRPM. Pro residues predominate over residues 213-233; the sequence is PGGPGPSGPGGPGPGPAPGLC. A compositionally biased stretch (low complexity) spans 234–244; the sequence is PGPNVMLNQQN. The span at 275–287 shows a compositional bias: pro residues; sequence APGPIPAAVPGPG. A compositionally biased stretch (low complexity) spans 365 to 375; that stretch reads YMGPPHQGPPM. 2 stretches are compositionally biased toward basic and acidic residues: residues 377–390 and 420–433; these read HGHD…HDMR and RGGR…TRPM. Residues 428 to 432 form a 1-1; approximate repeat; that stretch reads METRP. Residues 428 to 466 form an 8 X 5 AA tandem repeats of M-E-T-R-[AG] region; sequence METRPMETEVLEPRGMERRMETCAMETRGMDARGLEMRG. Residues 433–437 form a 1-2; approximate repeat; sequence METEV. The 1-3; approximate repeat unit spans residues 438–442; it reads LEPRG. Residues 443 to 446 form a 1-4; approximate repeat; the sequence is MERR. A 1-5; approximate repeat occupies 447–451; sequence METCA. A 1-6 repeat occupies 452–456; that stretch reads METRG. A 1-7; approximate repeat occupies 457–461; sequence MDARG. Residues 462–466 form a 1-8; approximate repeat; the sequence is LEMRG. The 2-1; approximate repeat unit spans residues 508 to 512; it reads GGTMQ. Residues 508–565 are 12 X 5 AA tandem repeats of G-[AT]-G-[MI]-Q; that stretch reads GGTMQGAGIQGGGMQGAGMQGGGMQGAGMQGGGMQGAGMQAGMQGASMQGGMQGAGMQ. One copy of the 2-2 repeat lies at 513-517; the sequence is GAGIQ. The stretch at 518–522 is one 2-3; approximate repeat; sequence GGGMQ. Residues 519–543 are compositionally biased toward gly residues; sequence GGMQGAGMQGGGMQGAGMQGGGMQG. A disordered region spans residues 519-590; sequence GGMQGAGMQG…GQSQVTPQDQ (72 aa). The stretch at 523–527 is one 2-4 repeat; the sequence is GAGMQ. One copy of the 2-5; approximate repeat lies at 528-532; it reads GGGMQ. The 2-6 repeat unit spans residues 533–537; it reads GAGMQ. A 2-7; approximate repeat occupies 538–542; the sequence is GGGMQ. A 2-8 repeat occupies 543–547; the sequence is GAGMQ. Low complexity predominate over residues 544–557; it reads AGMQAGMQGASMQG. A 2-9; approximate repeat occupies 548-551; that stretch reads AGMQ. Residues 552–556 form a 2-10; approximate repeat; that stretch reads GASMQ. A 2-11; approximate repeat occupies 557-560; sequence GGMQ. A compositionally biased stretch (gly residues) spans 558–574; it reads GMQGAGMQGASKQGGGQ. The stretch at 561 to 565 is one 2-12 repeat; it reads GAGMQ. Low complexity predominate over residues 575-584; it reads PSSFSPGQSQ. S579 carries the phosphoserine modification.

Expressed in testes, where it is restricted to pachytene spermatocytes and spermatids, and in the brain (at protein level).

It is found in the nucleus. Functionally, may play a significant role in AAUAAA-independent mRNA polyadenylation in germ cells. Directly involved in the binding to pre-mRNAs. This Mus musculus (Mouse) protein is Cleavage stimulation factor subunit 2 tau variant (Cstf2t).